The sequence spans 582 residues: METRPPAAPAKLSYGIRRGGWTRIGAATVAAGKKAAGDLDPRHHHHRVTHGGDGGGVGGGGSGGQEEADEQQQQQHDHHRLLQLHHHQGVQQDQEPPPVPVFHLQPASVRQLSGSSAEYALLSPMGDAGGHSHHHQHGFQPQLLSFGGVGHHHHLHQFTAQPQPPAASHTRGRGGGGEIVPATTTPRSRGGGGGGGGEIVAVQGGHIVRSTGRKDRHSKVCTARGPRDRRVRLSAHTAIQFYDVQDRLGYDRPSKAVDWLIKNAKDAIDKLDVLPAWQPTAGGAGAGNAAAPPSSSTHPDSAENSDDQAQAITVAHTAFDFAGGGSGGTSFLPPSLDSDAIADTIKSFFPMGGTAGGEASSSTTAAQSSAMGFQSYTPDLLSRTGSQSQELRLSLQSLPDPMFHHQQHRHGGGGGGGNGTTQQALFSGAANYSFGGGAMWATEQQAQNQRMLPWNVPDPGGGGGAAYLFNVSQQAAHMQAAAAALGGHQSQFFFQRGPLQSSNQPSERGWPETVEADNQMSHHQGGLSPSVSAAIGFAAPGIGFSGFRLPARIQGDEEHNGGGGGNGDKPPPPSSVSSASHH.

2 disordered regions span residues 30–78 (AAGK…QHDH) and 123–195 (SPMG…GGGG). Residues 51 to 64 (GGDGGGVGGGGSGG) are compositionally biased toward gly residues. The region spanning 213 to 271 (RKDRHSKVCTARGPRDRRVRLSAHTAIQFYDVQDRLGYDRPSKAVDWLIKNAKDAIDKL) is the TCP domain. Disordered stretches follow at residues 283–306 (GAGAGNAAAPPSSSTHPDSAENSD), 402–423 (MFHHQQHRHGGGGGGGNGTTQQ), and 548–582 (RLPARIQGDEEHNGGGGGNGDKPPPPSSVSSASHH).

In terms of assembly, forms homodimers and heterodimers with PCF2.

The protein resides in the nucleus. Its function is as follows. Transcription activator. Binds the promoter core sequence 5'-GGNCC-3'. The chain is Transcription factor PCF5 (PCF5) from Oryza sativa subsp. indica (Rice).